The sequence spans 248 residues: Transcription factor Spi-C (248 aa).

The segment at residues 111-194 (LRLFEYLHES…IRRKLTYQFS (84 aa)) is a DNA-binding region (ETS).

This sequence belongs to the ETS family. As to quaternary structure, binds DNA as a monomer.

It is found in the nucleus. Controls the development of red pulp macrophages required for red blood cells recycling and iron homeostasis. Transcription factor that binds to the PU-box, a purine-rich DNA sequence (5'-GAGGA[AT]-3') that can act as a lymphoid-specific enhancer. Regulates VCAM1 gene expression. The polypeptide is Transcription factor Spi-C (SPIC) (Bos taurus (Bovine)).